The primary structure comprises 493 residues: Glutamate--tRNA ligase (493 aa).

The 'HIGH' region motif lies at 9–19; the sequence is PSPTGDPHVGT. Positions 249–253 match the 'KMSKS' region motif; it reads KLSKR. An ATP-binding site is contributed by lysine 252.

The protein belongs to the class-I aminoacyl-tRNA synthetase family. Glutamate--tRNA ligase type 1 subfamily. Monomer.

Its subcellular location is the cytoplasm. It carries out the reaction tRNA(Glu) + L-glutamate + ATP = L-glutamyl-tRNA(Glu) + AMP + diphosphate. Functionally, catalyzes the attachment of glutamate to tRNA(Glu) in a two-step reaction: glutamate is first activated by ATP to form Glu-AMP and then transferred to the acceptor end of tRNA(Glu). This chain is Glutamate--tRNA ligase, found in Marinobacter nauticus (strain ATCC 700491 / DSM 11845 / VT8) (Marinobacter aquaeolei).